Reading from the N-terminus, the 339-residue chain is Ferrochelatase (339 aa).

2 residues coordinate Fe cation: histidine 202 and glutamate 283.

It belongs to the ferrochelatase family.

The protein localises to the cytoplasm. It carries out the reaction heme b + 2 H(+) = protoporphyrin IX + Fe(2+). The protein operates within porphyrin-containing compound metabolism; protoheme biosynthesis; protoheme from protoporphyrin-IX: step 1/1. Its function is as follows. Catalyzes the ferrous insertion into protoporphyrin IX. The chain is Ferrochelatase from Psychrobacter arcticus (strain DSM 17307 / VKM B-2377 / 273-4).